We begin with the raw amino-acid sequence, 464 residues long: Soluble pyridine nucleotide transhydrogenase (464 aa).

Asp35–Cys44 contacts FAD.

The protein belongs to the class-I pyridine nucleotide-disulfide oxidoreductase family. The cofactor is FAD.

Its subcellular location is the cytoplasm. It catalyses the reaction NAD(+) + NADPH = NADH + NADP(+). Conversion of NADPH, generated by peripheral catabolic pathways, to NADH, which can enter the respiratory chain for energy generation. This Pseudomonas fluorescens (strain SBW25) protein is Soluble pyridine nucleotide transhydrogenase.